Here is a 101-residue protein sequence, read N- to C-terminus: Large ribosomal subunit protein bL21 (101 aa).

The protein belongs to the bacterial ribosomal protein bL21 family. In terms of assembly, part of the 50S ribosomal subunit. Contacts protein L20.

In terms of biological role, this protein binds to 23S rRNA in the presence of protein L20. The sequence is that of Large ribosomal subunit protein bL21 from Corynebacterium efficiens (strain DSM 44549 / YS-314 / AJ 12310 / JCM 11189 / NBRC 100395).